A 616-amino-acid polypeptide reads, in one-letter code: General alpha-glucoside permease (616 aa).

At 1-115 (MKNIISLVSK…AALWSILVST (115 aa)) the chain is on the cytoplasmic side. Residues 15 to 27 (SKNEDKNISESSR) show a composition bias toward basic and acidic residues. Residues 15-40 (SKNEDKNISESSRDIVNQQEVFNTED) form a disordered region. Residues 116-136 (TLVMEGYDTALLSALYALPVF) traverse the membrane as a helical segment. The Extracellular portion of the chain corresponds to 137 to 160 (QRKFGTLNGEGSYEITSQWQIGLN). A helical transmembrane segment spans residues 161–181 (MCVLCGEMIGLQITTYMVEFM). At 182–191 (GNRYTMITAL) the chain is on the cytoplasmic side. A helical transmembrane segment spans residues 192–212 (GLLTAYIFILYYCKSLAMIAV). Residues 213-214 (GQ) are Extracellular-facing. The helical transmembrane segment at 215–235 (ILSAIPWGCFQSLAVTYASEV) threads the bilayer. Residues 236 to 242 (CPLALRY) lie on the Cytoplasmic side of the membrane. Residues 243–263 (YMTSYSNICWLFGQIFASGIM) form a helical membrane-spanning segment. Residues 264–278 (KNSQENLGNSDLGYK) are Extracellular-facing. The chain crosses the membrane as a helical span at residues 279-299 (LPFALQWIWPAPLMIGIFFAP). Residues 300–373 (ESPWWLVRKD…VNGRRTRLAC (74 aa)) lie on the Cytoplasmic side of the membrane. The helical transmembrane segment at 374–394 (LTWVAQNSSGAVLLGYSTYFF) threads the bilayer. Residues 395-404 (ERAGMATDKA) are Extracellular-facing. The helical transmembrane segment at 405–425 (FTFSLIQYCLGLAGTLCSWVI) threads the bilayer. Residues 426-433 (SGRVGRWT) are Cytoplasmic-facing. A helical membrane pass occupies residues 434 to 454 (ILTYGLAFQMVCLFIIGGMGF). Residues 455-466 (GSGSSASNGAGG) are Extracellular-facing. A helical membrane pass occupies residues 467–487 (LLLALSFFYNAGIGAVVYCIV). Over 488–504 (AEIPSAELRTKTIVLAR) the chain is Cytoplasmic. Residues 505–525 (ICYNLMAVINAILTPYMLNVS) traverse the membrane as a helical segment. Topologically, residues 526 to 532 (DWNWGAK) are extracellular. The helical transmembrane segment at 533-553 (TGLYWGGFTAVTLAWVIIDLP) threads the bilayer. The Cytoplasmic segment spans residues 554 to 616 (ETTGRTFSEI…QRELNAADKC (63 aa)). The tract at residues 587-616 (GKTQHDSLADESISQSSSIKQRELNAADKC) is disordered. The segment covering 606-616 (KQRELNAADKC) has biased composition (basic and acidic residues).

This sequence belongs to the major facilitator superfamily. Sugar transporter (TC 2.A.1.1) family.

It localises to the cell membrane. Its function is as follows. High-affinity uptake of alpha-glucosides such as maltose, turanose, isomaltose, alpha-methylglucoside, maltotriose, palatinose, trehalose, melezitose and glucose. Acts with the concomitant transport of protons into the cell (symport system). Provides an alternative and minor mechanism for growth on trehalose carbon source by transporting trehalose into the cytoplasm for conversion to glucose by neutral trehalase NTH1. This chain is General alpha-glucoside permease, found in Saccharomyces cerevisiae (strain CEN.PK113-7D) (Baker's yeast).